We begin with the raw amino-acid sequence, 584 residues long: Peroxynitrite isomerase THAP4 (584 aa).

The segment at Met-1 to Phe-85 adopts a THAP-type zinc-finger fold. The tract at residues Ile-84 to Ala-330 is disordered. Residues Glu-89–Asp-104 are compositionally biased toward basic residues. A compositionally biased stretch (low complexity) spans Gly-122 to Ala-138. The span at Ala-158–Asp-178 shows a compositional bias: basic and acidic residues. Residues Gly-190 to Asp-208 show a composition bias toward low complexity. The HCFC1-binding motif (HBM) signature appears at Leu-236–Tyr-239. Phosphoserine is present on Ser-240. The segment covering Glu-248–Glu-267 has biased composition (basic and acidic residues). The tract at residues Pro-422–Pro-584 is nitrobindin. The heme b site is built by Thr-451 and His-574.

It in the C-terminal section; belongs to the nitrobindin family. As to quaternary structure, homodimer. Heme b serves as cofactor.

The protein resides in the cytoplasm. Its subcellular location is the nucleus. The enzyme catalyses peroxynitrite = nitrate. It functions in the pathway nitrogen metabolism. Heme-binding protein able to scavenge peroxynitrite and to protect free L-tyrosine against peroxynitrite-mediated nitration, by acting as a peroxynitrite isomerase that converts peroxynitrite to nitrate. Therefore, this protein likely plays a role in peroxynitrite sensing and in the detoxification of reactive nitrogen and oxygen species (RNS and ROS, respectively). Is able to bind nitric oxide (NO) in vitro, but may act as a sensor of peroxynitrite levels in vivo, possibly modulating the transcriptional activity residing in the N-terminal region. This chain is Peroxynitrite isomerase THAP4, found in Bos taurus (Bovine).